Reading from the N-terminus, the 275-residue chain is 3-methyl-2-oxobutanoate hydroxymethyltransferase (275 aa).

D51 and D90 together coordinate Mg(2+). 3-methyl-2-oxobutanoate-binding positions include 51 to 52 (DS), D90, and K120. E122 is a Mg(2+) binding site. The Proton acceptor role is filled by E189.

Belongs to the PanB family. In terms of assembly, homodecamer; pentamer of dimers. Mg(2+) is required as a cofactor.

It is found in the cytoplasm. The catalysed reaction is 3-methyl-2-oxobutanoate + (6R)-5,10-methylene-5,6,7,8-tetrahydrofolate + H2O = 2-dehydropantoate + (6S)-5,6,7,8-tetrahydrofolate. It functions in the pathway cofactor biosynthesis; (R)-pantothenate biosynthesis; (R)-pantoate from 3-methyl-2-oxobutanoate: step 1/2. In terms of biological role, catalyzes the reversible reaction in which hydroxymethyl group from 5,10-methylenetetrahydrofolate is transferred onto alpha-ketoisovalerate to form ketopantoate. In Phenylobacterium zucineum (strain HLK1), this protein is 3-methyl-2-oxobutanoate hydroxymethyltransferase.